Consider the following 546-residue polypeptide: 2-isopropylmalate synthase (546 aa).

In terms of domain architecture, Pyruvate carboxyltransferase spans 5 to 274 (ITIFDTTLRD…TADVHTEHLT (270 aa)). The Mn(2+) site is built by Asp-14, His-209, His-211, and Asn-245. Residues 415-546 (RLDQFSVHLS…QNGIMHTYGE (132 aa)) are regulatory domain.

Belongs to the alpha-IPM synthase/homocitrate synthase family. LeuA type 1 subfamily. As to quaternary structure, homodimer. Mn(2+) is required as a cofactor.

It localises to the cytoplasm. It carries out the reaction 3-methyl-2-oxobutanoate + acetyl-CoA + H2O = (2S)-2-isopropylmalate + CoA + H(+). It participates in amino-acid biosynthesis; L-leucine biosynthesis; L-leucine from 3-methyl-2-oxobutanoate: step 1/4. Catalyzes the condensation of the acetyl group of acetyl-CoA with 3-methyl-2-oxobutanoate (2-ketoisovalerate) to form 3-carboxy-3-hydroxy-4-methylpentanoate (2-isopropylmalate). This is 2-isopropylmalate synthase from Salinibacter ruber (strain M8).